Reading from the N-terminus, the 337-residue chain is Cytoskeleton protein RodZ (337 aa).

Residues Met1 to Gly111 lie on the Cytoplasmic side of the membrane. The region spanning Leu19 to Leu71 is the HTH cro/C1-type domain. Residues Gln30–Glu49 constitute a DNA-binding region (H-T-H motif). The chain crosses the membrane as a helical; Signal-anchor for type II membrane protein span at residues Trp112–Trp132. At Trp133–Gln337 the chain is on the periplasmic side. Polar residues predominate over residues Thr145 to Asn167. The interval Thr145–Ala236 is disordered. Residues Thr168–Gln207 are compositionally biased toward low complexity. The segment covering Asn208 to Val218 has biased composition (polar residues). Low complexity predominate over residues Asp219–Ala236.

Belongs to the RodZ family.

Its subcellular location is the cell inner membrane. Cytoskeletal protein that is involved in cell-shape control through regulation of the length of the long axis. This is Cytoskeleton protein RodZ from Escherichia coli O9:H4 (strain HS).